The chain runs to 192 residues: Mediator of RNA polymerase II transcription subunit 29 (192 aa).

Positions 32-51 (MQQQSPQQMQPAPVPQQTQQ) are disordered.

The protein belongs to the Mediator complex subunit 29 family. Component of the Mediator complex.

It localises to the nucleus. Functionally, component of the Mediator complex, a coactivator involved in the regulated transcription of nearly all RNA polymerase II-dependent genes. Mediator functions as a bridge to convey information from gene-specific regulatory proteins to the basal RNA polymerase II transcription machinery. Mediator is recruited to promoters by direct interactions with regulatory proteins and serves as a scaffold for the assembly of a functional preinitiation complex with RNA polymerase II and the general transcription factors. This Bombyx mori (Silk moth) protein is Mediator of RNA polymerase II transcription subunit 29 (ix).